A 207-amino-acid chain; its full sequence is Large ribosomal subunit protein uL4 (207 aa).

The segment at 49–78 (HAVKNRSAVRGGGRKPWRQKGTGRARQGSI) is disordered. Over residues 60–71 (GGRKPWRQKGTG) the composition is skewed to basic residues.

It belongs to the universal ribosomal protein uL4 family. As to quaternary structure, part of the 50S ribosomal subunit.

In terms of biological role, one of the primary rRNA binding proteins, this protein initially binds near the 5'-end of the 23S rRNA. It is important during the early stages of 50S assembly. It makes multiple contacts with different domains of the 23S rRNA in the assembled 50S subunit and ribosome. Its function is as follows. Forms part of the polypeptide exit tunnel. The sequence is that of Large ribosomal subunit protein uL4 from Enterococcus faecalis (strain ATCC 700802 / V583).